Here is a 495-residue protein sequence, read N- to C-terminus: Protein FAM83F (495 aa).

A2 carries the post-translational modification N-acetylalanine. Positions 2–294 (AESQLSCLDE…LYAISEEVNL (293 aa)) are DUF1669. S4 is subject to Phosphoserine. Disordered regions lie at residues 341–362 (QQRE…GESA) and 384–495 (PISP…CVIS). Low complexity predominate over residues 447–458 (PAVPSSMASSPS). S477 bears the Phosphoserine mark.

The protein belongs to the FAM83 family. Directly interacts (via DUF1669) with CSNK1A1 and CSNK1A1L.

The protein localises to the cell membrane. In Mus musculus (Mouse), this protein is Protein FAM83F (Fam83f).